Here is an 838-residue protein sequence, read N- to C-terminus: Ribonucleoside-diphosphate reductase large subunit (838 aa).

Residues 6-97 (KLVTKRDGSV…VTALHKTTTE (92 aa)) enclose the ATP-cone domain. ATP-binding positions include 10 to 11 (KR), 16 to 22 (EPYDEKV), Thr-58, and Asp-62. Ser-227 provides a ligand contact to GDP. Cys-228 and Cys-454 are oxidised to a cystine. DTTP contacts are provided by residues 236 to 238 (DSI), Lys-253, Arg-266, and 273 to 274 (AG). A GDP-binding site is contributed by Asn-437. The active-site Proton acceptor is Asn-437. Cys-439 (cysteine radical intermediate) is an active-site residue. GDP contacts are provided by residues Glu-441 and 626 to 629 (TAST). Catalysis depends on Glu-441, which acts as the Proton acceptor. A compositionally biased stretch (basic and acidic residues) spans 780–794 (KELPKPDKQSKEEVH). Residues 780 to 838 (KELPKPDKQSKEEVHGSVGRGKRKRVGEKPTANHSNAGAPNLNGPPDTDGDGGCLNCGS) form a disordered region.

The protein belongs to the ribonucleoside diphosphate reductase large chain family. In terms of assembly, heterodimer of a large and a small subunit.

The enzyme catalyses a 2'-deoxyribonucleoside 5'-diphosphate + [thioredoxin]-disulfide + H2O = a ribonucleoside 5'-diphosphate + [thioredoxin]-dithiol. It carries out the reaction dCDP + [thioredoxin]-disulfide + H2O = CDP + [thioredoxin]-dithiol. With respect to regulation, under complex allosteric control mediated by deoxynucleoside triphosphates and ATP binding to separate specificity and activation sites on the large subunit. The type of nucleotide bound at the specificity site determines substrate preference. It seems probable that ATP makes the enzyme reduce CDP and UDP, dGTP favors ADP reduction and dTTP favors GDP reduction. Stimulated by ATP and inhibited by dATP binding to the activity site. Functionally, provides the precursors necessary for DNA synthesis. Catalyzes the rate limiting step in the de novo synthesis of deoxyribonucleotides by directly reducing ribonucleotides to the corresponding deoxyribonucleotides. This is Ribonucleoside-diphosphate reductase large subunit (RNR1) from Trypanosoma brucei brucei.